A 503-amino-acid chain; its full sequence is Arginyl-tRNA--protein transferase 1 (503 aa).

The protein belongs to the R-transferase family.

Its subcellular location is the cytoplasm. The catalysed reaction is an N-terminal L-alpha-aminoacyl-[protein] + L-arginyl-tRNA(Arg) = an N-terminal L-arginyl-L-aminoacyl-[protein] + tRNA(Arg) + H(+). In terms of biological role, involved in the post-translational conjugation of arginine to the N-terminal aspartate or glutamate of a protein. This arginylation is required for degradation of the protein via the ubiquitin pathway. Does not arginylate cysteine residues. This Saccharomyces cerevisiae (strain ATCC 204508 / S288c) (Baker's yeast) protein is Arginyl-tRNA--protein transferase 1 (ATE1).